Reading from the N-terminus, the 406-residue chain is L-cysteine:1D-myo-inositol 2-amino-2-deoxy-alpha-D-glucopyranoside ligase (406 aa).

C45 contacts Zn(2+). Residues 45 to 48 (CGIT), T60, and 83 to 85 (NIT) contribute to the L-cysteinyl-5'-AMP site. A 'HIGH' region motif is present at residues 47–57 (ITPYDATHMGH). The 'ERGGDP' region motif lies at 185–190 (ERGGDP). W225 is a binding site for L-cysteinyl-5'-AMP. C229 lines the Zn(2+) pocket. 247–249 (GSD) lines the L-cysteinyl-5'-AMP pocket. H254 serves as a coordination point for Zn(2+). V281 serves as a coordination point for L-cysteinyl-5'-AMP. The short motif at 287–291 (KMSKS) is the 'KMSKS' region element.

It belongs to the class-I aminoacyl-tRNA synthetase family. MshC subfamily. In terms of assembly, monomer. Zn(2+) is required as a cofactor.

It carries out the reaction 1D-myo-inositol 2-amino-2-deoxy-alpha-D-glucopyranoside + L-cysteine + ATP = 1D-myo-inositol 2-(L-cysteinylamino)-2-deoxy-alpha-D-glucopyranoside + AMP + diphosphate + H(+). In terms of biological role, catalyzes the ATP-dependent condensation of GlcN-Ins and L-cysteine to form L-Cys-GlcN-Ins. The sequence is that of L-cysteine:1D-myo-inositol 2-amino-2-deoxy-alpha-D-glucopyranoside ligase from Kribbella flavida (strain DSM 17836 / JCM 10339 / NBRC 14399).